The primary structure comprises 147 residues: Angiogenin (147 aa).

The signal sequence occupies residues 1 to 24 (MVMGLGVLLLVFVLGLGLTPPTLA). Residue Gln25 is modified to Pyrrolidone carboxylic acid. Catalysis depends on His37, which acts as the Proton acceptor. 2 residues coordinate tRNA: Arg45 and Asp46. Cystine bridges form between Cys50–Cys105, Cys63–Cys116, and Cys81–Cys131. A Nucleolar localization signal motif is present at residues 55-59 (RRRGL). Residues Cys105 and Val127 each coordinate tRNA. His138 (proton donor) is an active-site residue.

The protein belongs to the pancreatic ribonuclease family. In terms of assembly, homodimer. Interacts with RNH1; inhibiting ANG ribonuclease activity. Interacts with PCNA.

The protein localises to the secreted. It is found in the nucleus. Its subcellular location is the nucleolus. The protein resides in the cytoplasm. It localises to the stress granule. With respect to regulation, has weak tRNA ribonuclease activity by itself due to partial autoinhibition by its C-terminus, which folds into a short alpha-helix that partially occludes the substrate-binding site. In absence of stress, the ribonuclease activity is inhibited by RNH1 in the cytoplasm. In response to stress, dissociates from RNH1 in the cytoplasm and associates with cytoplasmic ribosomes with vacant A-sites: ribosomes directly activate the tRNA ribonuclease activity of ANG by refolding the C-terminal alpha-helix. In response to stress, the angiogenic activity of ANG is inhibited by RNH1 in the nucleus. Secreted ribonuclease that can either promote or restrict cell proliferation of target cells, depending on the context. Endocytosed in target cells via its receptor PLXNB2 and translocates to the cytoplasm or nucleus. Under stress conditions, localizes to the cytoplasm and promotes the assembly of stress granules (SGs): specifically cleaves a subset of tRNAs within anticodon loops to produce tRNA-derived stress-induced fragments (tiRNAs), resulting in translation repression and inhibition of cell proliferation. tiRNas also prevent formation of apoptosome, thereby promoting cell survival. Preferentially cleaves RNAs between a pyrimidine and an adenosine residue, suggesting that it cleaves the anticodon loop of tRNA(Ala) (32-UUAGCAU-38) after positions 33 and 36. Cleaves a subset of tRNAs, including tRNA(Ala), tRNA(Glu), tRNA(Gly), tRNA(Lys), tRNA(Val), tRNA(His), tRNA(Asp) and tRNA(Sec). Under growth conditions and in differentiated cells, translocates to the nucleus and stimulates ribosomal RNA (rRNA) transcription, including that containing the initiation site sequences of 45S rRNA, thereby promoting cell growth and proliferation. Angiogenin induces vascularization of normal and malignant tissues via its ability to promote rRNA transcription. Involved in hematopoietic stem and progenitor cell (HSPC) growth and survival by promoting rRNA transcription in growth conditions and inhibiting translation in response to stress, respectively. Mediates the crosstalk between myeloid and intestinal epithelial cells to protect the intestinal epithelial barrier integrity: secreted by myeloid cells and promotes intestinal epithelial cells proliferation and survival. Also mediates osteoclast-endothelial cell crosstalk in growing bone: produced by osteoclasts and protects the neighboring vascular cells against senescence by promoting rRNA transcription. This Pan troglodytes (Chimpanzee) protein is Angiogenin (ANG).